The primary structure comprises 548 residues: Chaperonin GroEL (548 aa).

ATP-binding positions include 30–33 (TLGP), Lys-51, 87–91 (DGTTT), Gly-415, and Asp-495.

The protein belongs to the chaperonin (HSP60) family. Forms a cylinder of 14 subunits composed of two heptameric rings stacked back-to-back. Interacts with the co-chaperonin GroES.

It is found in the cytoplasm. It catalyses the reaction ATP + H2O + a folded polypeptide = ADP + phosphate + an unfolded polypeptide.. Together with its co-chaperonin GroES, plays an essential role in assisting protein folding. The GroEL-GroES system forms a nano-cage that allows encapsulation of the non-native substrate proteins and provides a physical environment optimized to promote and accelerate protein folding. This chain is Chaperonin GroEL, found in Idiomarina loihiensis (strain ATCC BAA-735 / DSM 15497 / L2-TR).